The following is a 145-amino-acid chain: Deoxyuridine 5'-triphosphate nucleotidohydrolase (145 aa).

Residues Arg-65–Gly-67, Asn-78, and Thr-82–Asp-84 contribute to the substrate site.

It belongs to the dUTPase family. Mg(2+) is required as a cofactor.

It catalyses the reaction dUTP + H2O = dUMP + diphosphate + H(+). It functions in the pathway pyrimidine metabolism; dUMP biosynthesis; dUMP from dCTP (dUTP route): step 2/2. Its function is as follows. This enzyme is involved in nucleotide metabolism: it produces dUMP, the immediate precursor of thymidine nucleotides and it decreases the intracellular concentration of dUTP so that uracil cannot be incorporated into DNA. This Clostridium tetani (strain Massachusetts / E88) protein is Deoxyuridine 5'-triphosphate nucleotidohydrolase.